Here is a 274-residue protein sequence, read N- to C-terminus: 2,3,4,5-tetrahydropyridine-2,6-dicarboxylate N-succinyltransferase (274 aa).

The substrate site is built by R104 and D141.

This sequence belongs to the transferase hexapeptide repeat family. As to quaternary structure, homotrimer.

Its subcellular location is the cytoplasm. It catalyses the reaction (S)-2,3,4,5-tetrahydrodipicolinate + succinyl-CoA + H2O = (S)-2-succinylamino-6-oxoheptanedioate + CoA. It functions in the pathway amino-acid biosynthesis; L-lysine biosynthesis via DAP pathway; LL-2,6-diaminopimelate from (S)-tetrahydrodipicolinate (succinylase route): step 1/3. The chain is 2,3,4,5-tetrahydropyridine-2,6-dicarboxylate N-succinyltransferase from Shewanella loihica (strain ATCC BAA-1088 / PV-4).